The following is a 116-amino-acid chain: UPF0342 protein CTC_01059 (116 aa).

Belongs to the UPF0342 family.

This Clostridium tetani (strain Massachusetts / E88) protein is UPF0342 protein CTC_01059.